The following is a 236-amino-acid chain: Reticulon-3 (236 aa).

Low complexity predominate over residues 1 to 24 (MAEPSAATQSPSISSSSSGAEPSA). The segment at 1–31 (MAEPSAATQSPSISSSSSGAEPSAPGGGGSP) is disordered. Ala2 carries the N-acetylalanine modification. Residues 2-67 (AEPSAATQSP…KKTGFVFGTT (66 aa)) lie on the Cytoplasmic side of the membrane. Ser30 is subject to Phosphoserine. Residues 48–236 (VHDLIFWRDV…LPGIAKKKAE (189 aa)) enclose the Reticulon domain. Positions 68-91 (LIMLLSLAAFSVISVVSYLILALL) form an intramembrane region, helical. Residues 92-151 (SVTISFRIYKSVIQAVQKSEEGHPFKAYLDVDITLSSEAFHNYMNAAMVHINRALKLIIR) are Cytoplasmic-facing. An intramembrane region (helical) is located at residues 152–172 (LFLVEDLVDSLKLAVFMWLMT). Over 173-176 (YVGA) the chain is Cytoplasmic. The segment at residues 177-197 (VFNGITLLILAELLIFSVPIV) is an intramembrane region (helical). An interaction with FADD region spans residues 191–236 (IFSVPIVYEKYKTQIDHYVGIARDQTKSIVEKIQAKLPGIAKKKAE). Residues 198-236 (YEKYKTQIDHYVGIARDQTKSIVEKIQAKLPGIAKKKAE) lie on the Cytoplasmic side of the membrane. Residues 204 to 206 (QID) form an interaction with BACE1 region.

In terms of assembly, homodimer. Interacts with RTN4. Interacts with BACE1, BACE2, BCL2 and FADD. Interacts with ATL1 and ATL2. Interacts with TMEM33. Interacts with ZFYVE27 and with KIF5A in a ZFYVE27-dependent manner. Interacts with RIGI. Interacts with TRIM25.

It is found in the endoplasmic reticulum membrane. The protein resides in the golgi apparatus membrane. Its function is as follows. May be involved in membrane trafficking in the early secretory pathway. Inhibits BACE1 activity and amyloid precursor protein processing. May induce caspase-8 cascade and apoptosis. May favor BCL2 translocation to the mitochondria upon endoplasmic reticulum stress. Induces the formation of endoplasmic reticulum tubules. Acts also as an inflammation-resolving regulator by interacting with both TRIM25 and RIGI, subsequently impairing RIGI 'Lys-63'-linked polyubiquitination leading to IRF3 and NF-kappa-B inhibition. This chain is Reticulon-3 (RTN3), found in Pongo abelii (Sumatran orangutan).